A 205-amino-acid polypeptide reads, in one-letter code: Large ribosomal subunit protein uL10 (205 aa).

The tract at residues Ala-167–Ala-205 is disordered. Composition is skewed to low complexity over residues Gly-169 to Pro-180 and Pro-190 to Ala-205.

Belongs to the universal ribosomal protein uL10 family. As to quaternary structure, part of the ribosomal stalk of the 50S ribosomal subunit. The N-terminus interacts with L11 and the large rRNA to form the base of the stalk. The C-terminus forms an elongated spine to which L12 dimers bind in a sequential fashion forming a multimeric L10(L12)X complex.

Forms part of the ribosomal stalk, playing a central role in the interaction of the ribosome with GTP-bound translation factors. The sequence is that of Large ribosomal subunit protein uL10 from Treponema denticola (strain ATCC 35405 / DSM 14222 / CIP 103919 / JCM 8153 / KCTC 15104).